Here is a 379-residue protein sequence, read N- to C-terminus: Cell division protein FtsZ (379 aa).

GTP-binding positions include 18 to 22 (GGGVN), 105 to 107 (GTG), Glu-136, Arg-140, and Asp-184.

It belongs to the FtsZ family. As to quaternary structure, homodimer. Polymerizes to form a dynamic ring structure in a strictly GTP-dependent manner. Interacts directly with several other division proteins.

The protein resides in the cytoplasm. Functionally, essential cell division protein that forms a contractile ring structure (Z ring) at the future cell division site. The regulation of the ring assembly controls the timing and the location of cell division. One of the functions of the FtsZ ring is to recruit other cell division proteins to the septum to produce a new cell wall between the dividing cells. Binds GTP and shows GTPase activity. The chain is Cell division protein FtsZ from Mycobacterium leprae (strain TN).